The primary structure comprises 195 residues: SPbeta prophage-derived uncharacterized protein YotM (195 aa).

This is SPbeta prophage-derived uncharacterized protein YotM (yotM) from Bacillus subtilis (strain 168).